A 31-amino-acid polypeptide reads, in one-letter code: Cytochrome b6-f complex subunit 6 (31 aa).

The helical transmembrane segment at 4 to 24 (VISYLSLLFISFLFALTLFIV) threads the bilayer.

It belongs to the PetL family. The 4 large subunits of the cytochrome b6-f complex are cytochrome b6, subunit IV (17 kDa polypeptide, PetD), cytochrome f and the Rieske protein, while the 4 small subunits are PetG, PetL, PetM and PetN. The complex functions as a dimer.

Its subcellular location is the plastid. The protein localises to the chloroplast thylakoid membrane. Functionally, component of the cytochrome b6-f complex, which mediates electron transfer between photosystem II (PSII) and photosystem I (PSI), cyclic electron flow around PSI, and state transitions. PetL is important for photoautotrophic growth as well as for electron transfer efficiency and stability of the cytochrome b6-f complex. This is Cytochrome b6-f complex subunit 6 from Chara vulgaris (Common stonewort).